The following is a 150-amino-acid chain: MNTLKMQRRIAAEILKCGENRIWIDPERIDDVASAITREDIKRLIKEGVIKKKPIKGQSRYRAKIRHEQKKKGRHRGPGSRKGKKTARMGKKELWIKTIRALRKELRKLKAQKKIDRKTYRMLYIRAKGGQFKNKHQLYLFLEEHGLLKK.

The tract at residues 55 to 89 is disordered; that stretch reads IKGQSRYRAKIRHEQKKKGRHRGPGSRKGKKTARM.

It belongs to the eukaryotic ribosomal protein eL19 family. As to quaternary structure, part of the 50S ribosomal subunit.

Its function is as follows. Binds to the 23S rRNA. This is Large ribosomal subunit protein eL19 from Pyrococcus furiosus (strain ATCC 43587 / DSM 3638 / JCM 8422 / Vc1).